Reading from the N-terminus, the 250-residue chain is Urease accessory protein UreF (250 aa).

The interval 1-21 is disordered; the sequence is MDEADPGEAEAAQAEAAQDGA. The segment covering 9–21 has biased composition (low complexity); the sequence is AEAAQAEAAQDGA.

This sequence belongs to the UreF family. In terms of assembly, ureD, UreF and UreG form a complex that acts as a GTP-hydrolysis-dependent molecular chaperone, activating the urease apoprotein by helping to assemble the nickel containing metallocenter of UreC. The UreE protein probably delivers the nickel.

It localises to the cytoplasm. Its function is as follows. Required for maturation of urease via the functional incorporation of the urease nickel metallocenter. The sequence is that of Urease accessory protein UreF from Methylobacterium sp. (strain 4-46).